Consider the following 223-residue polypeptide: Glutathione S-transferase 4 (223 aa).

Alanine 2 bears the Blocked amino end (Ala) mark. The GST N-terminal domain maps to 4–85 (PAVKVYGWAI…HVLRKHKPEL (82 aa)). Residues serine 14, 43 to 44 (HR), 56 to 57 (KV), and 69 to 70 (ES) each bind glutathione. One can recognise a GST C-terminal domain in the interval 90 to 223 (RLEQTAMVDV…VGAGAPKEQE (134 aa)).

The protein belongs to the GST superfamily. Phi family. In terms of assembly, homodimer or heterodimer of GST-I and GST-IV (=GST-II). In terms of tissue distribution, seedling roots.

It carries out the reaction RX + glutathione = an S-substituted glutathione + a halide anion + H(+). Conjugation of reduced glutathione to a wide number of exogenous and endogenous hydrophobic electrophiles. Involved in the detoxification of certain herbicides. Most active with substrates possessing a chloroacetamide structure. Trans-cinnamic acid and 1-chloro-2,4-dinitrobenzene are not effective substrates. May play an important role in the benoxacor-mediated protection of maize from metolachlor injury. This chain is Glutathione S-transferase 4 (GST4), found in Zea mays (Maize).